The chain runs to 120 residues: MSFEVPSPYVWDDSFRVAYDNLDSEHQALFKCIAKCAENRADAAALADLVKVTVDHFADEERMMAKTNFSGLPEHNKIHSEFVAKIKSLSAPLDDATVAFAKQWLVNHIKGIDFKYKGNL.

7 residues coordinate Fe cation: histidine 26, histidine 56, glutamate 60, histidine 75, histidine 79, histidine 108, and aspartate 113.

The protein belongs to the hemerythrin family.

Myohemerythrin is an oxygen-binding protein found in the retractor muscles of certain worms. The oxygen-binding site contains two iron atoms. The polypeptide is Myohemerythrin (Riftia pachyptila (Vent tube worm)).